Reading from the N-terminus, the 503-residue chain is ATP synthase subunit alpha (503 aa).

An ATP-binding site is contributed by 170 to 177 (GDRATGKT).

The protein belongs to the ATPase alpha/beta chains family. In terms of assembly, F-type ATPases have 2 components, CF(1) - the catalytic core - and CF(0) - the membrane proton channel. CF(1) has five subunits: alpha(3), beta(3), gamma(1), delta(1), epsilon(1). CF(0) has three main subunits: a(1), b(2) and c(9-12). The alpha and beta chains form an alternating ring which encloses part of the gamma chain. CF(1) is attached to CF(0) by a central stalk formed by the gamma and epsilon chains, while a peripheral stalk is formed by the delta and b chains.

It localises to the cell inner membrane. The catalysed reaction is ATP + H2O + 4 H(+)(in) = ADP + phosphate + 5 H(+)(out). In terms of biological role, produces ATP from ADP in the presence of a proton gradient across the membrane. The alpha chain is a regulatory subunit. The sequence is that of ATP synthase subunit alpha from Aquifex aeolicus (strain VF5).